A 903-amino-acid chain; its full sequence is MNAHATPTPAHEIDPTGATPVMAQFFEMKARQPDALIFFRMGDFYELFFDDAYKAAAALGISQTFRGTHNGQPIPMAGVPQHAAEAYLSKLIRLGFKVAVCEQMEDPAEAKKRGSKAVVRRDIVRVVTPGTLTEDGLLDARGANRLAAVALRAGQAAVASVELSTGEVEVLAVAKEGVAPILAALAPSETLVADRLLSDDSLSQTLRICGGLVQPMPSALSEPQASETRVKRLYGVETLDGFGGLSPAEIGALGLIAAHLEMTQAGRLPALRAPRRAADADVMAIDPATRSSLEIDRTQSGDRNGSLLAAIDRTVTAGGARMLASRLARPLLDVAAIDQRLDAVEWFVEHRQLRQRLREVLKGAGDMARALSRLALGRGGPRDLGCIRDTLKVGERLAGMAGGAPDPLSPPPFELEHAFKALTPALHEGLSQFLTTLEHGLGPDLPALARDGGFVAAGVRPELDQARGLRDDSRKVIAALESQLALESGVPLKIRHNGVLGYFVEATAGKADPLFQPPLNATFIHRQTLANQVRFTTVELADLDARIAQAAERALAMEVAAFEDWREQARLLADAIQIASEALARIDVASSLAEWAEDAGAVRPVVDASYAFDAKAARHPVVEAAVKRAGEPYTPNDCRLDASGETAARLSIVTGPNMAGKSTFLRQNALLAILAQSGCYVPAASFRLGVVDRLFSRVGAGDDLARGRSTFMMEMVETASILTQAGPRSLVILDEIGRGTATYDGLAIAWACAEALHDTNRCRALFATHYHELATLETRMAFVSNLSLRAKEWNGDLVFLHEAAPGPADRSYGVQVAKLAGVPAPVVVRAREVLDRLESKDQSPAKLDDLPLFAVSQAVAVTSAPAKAAPSAVETSLADLDVDGMSPREALEALYRLKGLLTA.

655 to 662 is an ATP binding site; it reads GPNMAGKS.

Belongs to the DNA mismatch repair MutS family.

This protein is involved in the repair of mismatches in DNA. It is possible that it carries out the mismatch recognition step. This protein has a weak ATPase activity. The protein is DNA mismatch repair protein MutS of Caulobacter vibrioides (strain ATCC 19089 / CIP 103742 / CB 15) (Caulobacter crescentus).